The primary structure comprises 2324 residues: Acetyl-CoA carboxylase (2324 aa).

At M1 the chain carries N-acetylmethionine. The disordered stretch occupies residues M1–S34. Phosphoserine occurs at positions 78 and 80. Residues V117–A618 enclose the Biotin carboxylation domain. One can recognise an ATP-grasp domain in the interval Q275–M466. G315–G320 contributes to the ATP binding site. Mn(2+) is bound by residues E424, E437, and N439. Residue R441 is part of the active site. The Biotinyl-binding domain maps to F745–Q819. N6-biotinyllysine is present on K786. S1193 is modified (phosphoserine). Positions P1553 to K1891 constitute a CoA carboxyltransferase N-terminal domain. Residues P1553 to D2211 form a carboxyltransferase region. Residues R1800, K2104, and R2106 each contribute to the CoA site. Positions P1895–D2211 constitute a CoA carboxyltransferase C-terminal domain.

It depends on biotin as a cofactor. The cofactor is Mn(2+).

The protein resides in the cytoplasm. The enzyme catalyses hydrogencarbonate + acetyl-CoA + ATP = malonyl-CoA + ADP + phosphate + H(+). The catalysed reaction is N(6)-biotinyl-L-lysyl-[protein] + hydrogencarbonate + ATP = N(6)-carboxybiotinyl-L-lysyl-[protein] + ADP + phosphate + H(+). Its pathway is lipid metabolism; malonyl-CoA biosynthesis; malonyl-CoA from acetyl-CoA: step 1/1. With respect to regulation, by phosphorylation. Its function is as follows. Catalyzes the rate-limiting reaction in the biogenesis of long-chain fatty acids. Carries out three functions: biotin carboxyl carrier protein, biotin carboxylase and carboxyltransferase. The sequence is that of Acetyl-CoA carboxylase (ACAC) from Gallus gallus (Chicken).